Here is a 92-residue protein sequence, read N- to C-terminus: MVKSELVQIIARHNPHLFQRDVENIVNAIFEEISTALANGDRVELRGFGAFSVKSRSARNGRNPRTGEAVAVDEKWIPFFKTGKDLRDRLNQ.

This sequence belongs to the bacterial histone-like protein family. Heterodimer of an alpha and a beta chain.

Functionally, this protein is one of the two subunits of integration host factor, a specific DNA-binding protein that functions in genetic recombination as well as in transcriptional and translational control. This is Integration host factor subunit beta from Bartonella tribocorum (strain CIP 105476 / IBS 506).